The sequence spans 434 residues: UDP-N-acetylglucosamine 1-carboxyvinyltransferase (434 aa).

Residue 22-23 (KN) participates in phosphoenolpyruvate binding. UDP-N-acetyl-alpha-D-glucosamine is bound at residue Arg-93. Catalysis depends on Cys-117, which acts as the Proton donor. At Cys-117 the chain carries 2-(S-cysteinyl)pyruvic acid O-phosphothioketal. UDP-N-acetyl-alpha-D-glucosamine contacts are provided by Asp-307 and Val-329.

Belongs to the EPSP synthase family. MurA subfamily.

Its subcellular location is the cytoplasm. The enzyme catalyses phosphoenolpyruvate + UDP-N-acetyl-alpha-D-glucosamine = UDP-N-acetyl-3-O-(1-carboxyvinyl)-alpha-D-glucosamine + phosphate. Its pathway is cell wall biogenesis; peptidoglycan biosynthesis. Cell wall formation. Adds enolpyruvyl to UDP-N-acetylglucosamine. In Coxiella burnetii (strain CbuG_Q212) (Coxiella burnetii (strain Q212)), this protein is UDP-N-acetylglucosamine 1-carboxyvinyltransferase.